The sequence spans 253 residues: Probable transcriptional regulatory protein RAF_ORF0717 (253 aa).

Positions 1–21 (MAGHSKFKNIQHRKGAQDKKR) are disordered.

It belongs to the TACO1 family.

It localises to the cytoplasm. The polypeptide is Probable transcriptional regulatory protein RAF_ORF0717 (Rickettsia africae (strain ESF-5)).